Here is a 171-residue protein sequence, read N- to C-terminus: Adenine phosphoribosyltransferase (171 aa).

This sequence belongs to the purine/pyrimidine phosphoribosyltransferase family. In terms of assembly, homodimer.

The protein resides in the cytoplasm. It carries out the reaction AMP + diphosphate = 5-phospho-alpha-D-ribose 1-diphosphate + adenine. The protein operates within purine metabolism; AMP biosynthesis via salvage pathway; AMP from adenine: step 1/1. In terms of biological role, catalyzes a salvage reaction resulting in the formation of AMP, that is energically less costly than de novo synthesis. The protein is Adenine phosphoribosyltransferase of Nitrosococcus oceani (strain ATCC 19707 / BCRC 17464 / JCM 30415 / NCIMB 11848 / C-107).